The chain runs to 138 residues: Ribonuclease VapC21 (138 aa).

A PINc domain is found at 6 to 128; the sequence is LLDKSAAYRA…ERIAAITRQP (123 aa). 2 residues coordinate Mg(2+): Asp-8 and Asp-97.

It belongs to the PINc/VapC protein family. The cofactor is Mg(2+).

Functionally, toxic component of a type II toxin-antitoxin (TA) system. An RNase. Its toxic effect is neutralized by coexpression with cognate antitoxin VapB21. This is Ribonuclease VapC21 from Mycobacterium tuberculosis (strain CDC 1551 / Oshkosh).